The primary structure comprises 1213 residues: Filamin-A-interacting protein 1 (1213 aa).

Residues 1-70 (MRSRNQGGES…TSGECERKTK (70 aa)) are disordered. The segment covering 61-70 (TSGECERKTK) has biased composition (basic and acidic residues). The residue at position 138 (Ser138) is a Phosphoserine. 2 coiled-coil regions span residues 192–591 (DYMN…ELSC) and 624–781 (PEDN…LSKR). Disordered regions lie at residues 878–900 (NGPS…PGEV) and 949–976 (KPRI…GPER). Composition is skewed to polar residues over residues 880 to 894 (PSIT…NSSP) and 960 to 970 (VMPQKQKSGDT). Ser979 carries the post-translational modification Phosphoserine. Positions 1103 to 1213 (VSTGTVLRSP…STTSLGGGKG (111 aa)) are disordered. Positions 1125–1138 (VTSTITITPVTTSS) are enriched in low complexity. Polar residues predominate over residues 1139–1156 (ARGTQSVSGQDGSSQRPT). Positions 1168 to 1179 (AGKPVVAAPGAG) are enriched in low complexity.

It belongs to the FILIP1 family. In terms of assembly, interacts with FLNA. Interacts with RHOD (in GTP-bound form). As to expression, moderately expressed in adult heart and brain. Weakly expressed in lung, skeletal muscle, ovary, testis, kidney, and fetal brain, and hardly detectable in liver, pancreas, spleen, and fetal liver. Within brain, moderate expression is found in amygdala and caudate nucleus. Expressed in skin fibroblasts.

It is found in the cytoplasm. It localises to the cytoskeleton. By acting through a filamin-A/F-actin axis, it controls the start of neocortical cell migration from the ventricular zone. May be able to induce the degradation of filamin-A. The chain is Filamin-A-interacting protein 1 (FILIP1) from Homo sapiens (Human).